Here is a 2065-residue protein sequence, read N- to C-terminus: MEWLAPALERDLGIDQRQTAHSQRPNELVVLVPTRWVMALRNKRVTRCAKYESFSEGEICTLLQRSQMKLPSGWTRVCIQGLRKRKLGYRFARETGCHGEGLSQDSFMTLMQGVSQSNFRNLWHEAYMTHVQPYADSVEQTPVLALDAVRQALQKLFCSNFISTDRVSPSLSPAKEKEKDCPFLSTCSAPKQSTESLCPNVLPAECLLESEEVLYVVFPYTQYTVHDIVTYSPAKLANSNAKILFILYQLLIAMRECHASGLLCGELSLLDIAVDEQLCSRLKISLAHYEKFKEYRDAVPYALQNKVPMSVSTKDNHNNGVSGQLCRNCQDELKSLVLDWVNGQVSNFQYLMELNRLAGRREGDPNYHPVLPWVVDFTVPYGRFRDLKKSKFRLNKGDKQLDFTYEMTKEALAAVSGSGGSNYPPDLGGPVVPGGPGQSDHLHVPHHISDVLSDITYYVYKARQTPKSVLCSHVRSQWEPNEYPASMERIQSWTPDECIPEFYRDPSIFRSIHPDMPDLDVPPWCNSYEEFIAVHRQLLESREVSQQLHHWIDLTFGYKLSGKEAIKAKNVCLHLVDNHTHLTSYGVVQLFDHPHPPRLALYQYAPPEPPHFGRVNVTTWQIPPLETTMDGVDGLVPEATGCESSGWSVVGRDEELEQAIEALDLSGSSSSTSASVSIPVVGSAAGKTSGETIGLVVSPSHGSFPGEATGNVTNTLGSGIRTAMLHRAASVSKKPEASNLEDFKISLPDGFKPLQPLEELEKLNTFLVKGLHSEIEHTMDLGINKKDLRSVPKVPLSFTDLFQRDMQALGVLIAEIFYSSKLRGLRPETHLRDRFQAVLKLCSTNLRDVPLPLHHALDTLLQVHKHCLKTETIIMHPQGLPFLFKYDPICEGLPPPNPWQLLSPIVSPLPFPEYFPTLHKFIFSYHSKMESINNIQGRDIVFNLWQQLETLLKGDITTEGLEILLPFVLSLMSEESTAVYAAWYLFEPVSRVLGPRNASKYLIKPLVGVYENPRCLRGRFYLYTDCFVLQLIVRLGLQVFLSSLLPHVLQVMTGFESCNTAAGTEWEGMKVLRGAAGALDEEEEEYECDDRRSSNATSSGKVGGGSGGGSGGVGVVGDQGLVDYSSGISLNDQVFLNEGEDFQNGFYVNNSASGATTVGTKQQNQSTANKDQDQESLSVGKLSDKSSASEVSIGDRASLKSADSSQDLKQASDGEDGGELEDEEETVEDREITVQRVPSLEMTLSVCTEESEATVATLEGDVMNGIVQEDGEKNMEEEETEHDPLEDSEEKEHKILLDTVCKTVRWLSAKLGPTLTSRFIARNLLRLLTSCYIGLDKHQFMLSVNEENSLECVGSVYEKKPVVGDQTARPVLECLIYIAHLYGEPVLTYQYLPYIGYLVSPPSSCRLNTRKEAGLLGAVVLTQKIIVFLSDTTLMDMLMKINQEVLLPLLDLLTSTKMGFPSGVQTRSAVCLKTLSLMALICLRIGREMVQQHMAETLSRFFQVFSLLQFLQNQIGSAPRREVAECTYLDLRIPDGAELTIELGVLEELQAVFNPEMAYASYIPFYCLIGDSGIRKLVTNHELVWSLAQSYHERASPGSPESNPVGGQRASAVGLSPSMGRQMSRSPFPAPSSTSTPLGGDILPESGTFGSHLVGNRIQVTRDTEACGSPNLSSLETWTHGRPYGSNAPPMSLATTALSSAGPSFSHSSYSWVMGPTPEDSALKQDLPRSSRSLQGNWLAYWQYEIGLNQQDSHFHFHQIRLQSFIGHSGTAKCLAPLAGEDYFLSGSKDKTVRLWPLYNHGDGTREVEPRLTYTEHRKSIFYVGQLEALQEVVSCDGTVHLWDQFTGKNIRCNEPLDGKNPITAVTTMPAPHCSVVFASADSVLRFIDPRKPGLQHEFRLAYSNLSAGLIRCLAVSPGGRTIAAGFSTGFIVLLDARTGLVLRGWPGHEGDILQMKAAEGNLLVSSSSDHTLTVWKDVEHKPLHQYRTPSDPIHAFDLYGAEIVAGTVANKIGVYSILDSTASLAGSTKLSTENFRGTLTSLSVLPTKRLLLLGSDNGAIRLLA.

Residues Leu-325–Val-617 form the BEACH domain. Disordered regions lie at residues Glu-1082 to Gly-1111, Thr-1156 to Arg-1230, Gly-1271 to Glu-1290, and Ala-1595 to Ile-1642. Residues Lys-1101–Gly-1111 are compositionally biased toward gly residues. Over residues Thr-1156–Asn-1169 the composition is skewed to polar residues. The segment covering Asp-1213 to Glu-1228 has biased composition (acidic residues). A compositionally biased stretch (low complexity) spans Ser-1624–Pro-1637. WD repeat units lie at residues Gly-1767 to Arg-1806, Thr-1813 to Cys-1853, Leu-1906 to Gly-1945, Gly-1948 to Gln-1986, and Asn-2035 to Ala-2065.

It belongs to the WD repeat WDR81 family. Widely expressed.

It localises to the early endosome membrane. The protein resides in the late endosome membrane. Its subcellular location is the lysosome membrane. The protein localises to the cytoplasmic vesicle. It is found in the autophagosome membrane. It localises to the mitochondrion. The protein resides in the cytoplasm. Its subcellular location is the cytosol. Functionally, functions as a negative regulator of the PI3 kinase/PI3K activity associated with endosomal membranes. By modifying the phosphatidylinositol 3-phosphate/PtdInsP3 content of endosomal membranes may regulate endosome fusion, recycling, sorting and early to late endosome transport. May also play a role in aggrephagy, the macroautophagic degradation of ubiquitinated protein aggregates. May also be involved in maintenance of normal mitochondrial structure and organization. The sequence is that of WD repeat-containing protein 81 (wdr81) from Danio rerio (Zebrafish).